The chain runs to 191 residues: dCTP deaminase (191 aa).

Residues Lys112–Arg117, Thr136–Glu138, Gln157, Tyr173, and Gln183 each bind dCTP. Catalysis depends on Glu138, which acts as the Proton donor/acceptor.

Belongs to the dCTP deaminase family. As to quaternary structure, homotrimer.

It carries out the reaction dCTP + H2O + H(+) = dUTP + NH4(+). The protein operates within pyrimidine metabolism; dUMP biosynthesis; dUMP from dCTP (dUTP route): step 1/2. Its function is as follows. Catalyzes the deamination of dCTP to dUTP. The sequence is that of dCTP deaminase from Psychrobacter sp. (strain PRwf-1).